Here is a 581-residue protein sequence, read N- to C-terminus: Penicillin-binding protein activator LpoA (581 aa).

Positions M1 to G26 are cleaved as a signal peptide. The N-palmitoyl cysteine moiety is linked to residue C27. Residue C27 is the site of S-diacylglycerol cysteine attachment.

The protein belongs to the LpoA family. As to quaternary structure, interacts with PBP1a.

It is found in the cell outer membrane. Regulator of peptidoglycan synthesis that is essential for the function of penicillin-binding protein 1A (PBP1a). This Histophilus somni (strain 129Pt) (Haemophilus somnus) protein is Penicillin-binding protein activator LpoA.